We begin with the raw amino-acid sequence, 522 residues long: Cytochrome P450 monooxygenase sirB (522 aa).

A helical transmembrane segment spans residues 22–42 (ASAILFCTLLTVFLFISQGTV). N-linked (GlcNAc...) asparagine glycosylation is present at Asn-191. A helical membrane pass occupies residues 304–324 (VLHLSFAATGTVAILITHMIY). A heme-binding site is contributed by Cys-462.

This sequence belongs to the cytochrome P450 family. It depends on heme as a cofactor.

The protein resides in the membrane. The protein operates within mycotoxin biosynthesis. Functionally, cytochrome P450 monooxygenase; part of the gene cluster that mediates the biosynthesis of sirodesmin PL, an epipolythiodioxopiperazine (ETP) characterized by a disulfide bridged cyclic dipeptide and that acts as a phytotoxin which is involved in the blackleg didease of canola. SirD catalyzes the O-prenylation of L-tyrosine (L-Tyr) in the presence of dimethylallyl diphosphate (DMAPP) to yield 4-O-dimethylallyl-L-Tyr, and therefore represents probably the first pathway-specific enzyme in the biosynthesis of sirodesmin PL. 4-O-dimethylallyl-L-Tyr, then undergoes condensation with L-Ser in a reaction catalyzed by the non-ribosomal peptide synthase sirP to form the diketopiperazine (DKP) backbone. Further bishydroxylation of the DKP performed by the cytochrome P450 monooxygenase sirC leads to the production of the intermediate phomamide. This step is essential to form the reactive thiol group required for toxicity of sirodesmin PL. The next steps of sirodesmin biosynthesis are not well understood yet, but some predictions could be made from intermediate compounds identification. Phomamide is converted into phomalizarine via oxidation, probably by sirT. Further oxidation, methylation (by sirM or sirN) and reduction steps convert phomalizarine to deacetyl sirodesmin. Finally, acetyltransferase sirH probably acetylates deacetyl sirodesmin to produce sirodesmin PL. The sequence is that of Cytochrome P450 monooxygenase sirB from Leptosphaeria maculans (Blackleg fungus).